Here is a 266-residue protein sequence, read N- to C-terminus: Small ribosomal subunit protein uS2 (266 aa).

This sequence belongs to the universal ribosomal protein uS2 family.

This Bartonella tribocorum (strain CIP 105476 / IBS 506) protein is Small ribosomal subunit protein uS2.